The sequence spans 270 residues: Glutamate 5-kinase (270 aa).

An ATP-binding site is contributed by lysine 18. Serine 54, aspartate 141, and asparagine 153 together coordinate substrate. 173–174 (SD) contacts ATP.

Belongs to the glutamate 5-kinase family.

It is found in the cytoplasm. It catalyses the reaction L-glutamate + ATP = L-glutamyl 5-phosphate + ADP. It participates in amino-acid biosynthesis; L-proline biosynthesis; L-glutamate 5-semialdehyde from L-glutamate: step 1/2. Its function is as follows. Catalyzes the transfer of a phosphate group to glutamate to form L-glutamate 5-phosphate. The polypeptide is Glutamate 5-kinase (Leifsonia xyli subsp. xyli (strain CTCB07)).